An 85-amino-acid chain; its full sequence is Toxin BmKa3 (85 aa).

Residues 1 to 19 form the signal peptide; it reads MNYLVFFSLALLLMTGVES. Residues 21–83 enclose the LCN-type CS-alpha/beta domain; it reads RDGYIADDKN…VPIRVPGKCN (63 aa). Cystine bridges form between Cys-31/Cys-82, Cys-35/Cys-55, Cys-41/Cys-65, and Cys-45/Cys-67.

It belongs to the long (4 C-C) scorpion toxin superfamily. Sodium channel inhibitor family. Alpha subfamily. As to expression, expressed by the venom gland.

It localises to the secreted. Its function is as follows. Alpha toxins bind voltage-independently at site-3 of sodium channels (Nav) and inhibit the inactivation of the activated channels, thereby blocking neuronal transmission. This Olivierus martensii (Manchurian scorpion) protein is Toxin BmKa3.